Consider the following 95-residue polypeptide: Aspartyl/glutamyl-tRNA(Asn/Gln) amidotransferase subunit C (95 aa).

Belongs to the GatC family. As to quaternary structure, heterotrimer of A, B and C subunits.

The enzyme catalyses L-glutamyl-tRNA(Gln) + L-glutamine + ATP + H2O = L-glutaminyl-tRNA(Gln) + L-glutamate + ADP + phosphate + H(+). The catalysed reaction is L-aspartyl-tRNA(Asn) + L-glutamine + ATP + H2O = L-asparaginyl-tRNA(Asn) + L-glutamate + ADP + phosphate + 2 H(+). Allows the formation of correctly charged Asn-tRNA(Asn) or Gln-tRNA(Gln) through the transamidation of misacylated Asp-tRNA(Asn) or Glu-tRNA(Gln) in organisms which lack either or both of asparaginyl-tRNA or glutaminyl-tRNA synthetases. The reaction takes place in the presence of glutamine and ATP through an activated phospho-Asp-tRNA(Asn) or phospho-Glu-tRNA(Gln). In Desulforapulum autotrophicum (strain ATCC 43914 / DSM 3382 / VKM B-1955 / HRM2) (Desulfobacterium autotrophicum), this protein is Aspartyl/glutamyl-tRNA(Asn/Gln) amidotransferase subunit C.